The primary structure comprises 357 residues: Carbamoyl phosphate synthase small chain (357 aa).

Positions Met-1–Asn-168 are CPSase. Ser-46, Gly-220, and Gly-222 together coordinate L-glutamine. In terms of domain architecture, Glutamine amidotransferase type-1 spans Lys-172 to Lys-357. Cys-247 functions as the Nucleophile in the catalytic mechanism. L-glutamine-binding residues include Leu-248, Gln-251, Asn-289, Gly-291, and Tyr-292. Active-site residues include His-331 and Asp-333.

This sequence belongs to the CarA family. In terms of assembly, composed of two chains; the small (or glutamine) chain promotes the hydrolysis of glutamine to ammonia, which is used by the large (or ammonia) chain to synthesize carbamoyl phosphate. Tetramer of heterodimers (alpha,beta)4.

The enzyme catalyses hydrogencarbonate + L-glutamine + 2 ATP + H2O = carbamoyl phosphate + L-glutamate + 2 ADP + phosphate + 2 H(+). The catalysed reaction is L-glutamine + H2O = L-glutamate + NH4(+). The protein operates within amino-acid biosynthesis; L-arginine biosynthesis; carbamoyl phosphate from bicarbonate: step 1/1. Its pathway is pyrimidine metabolism; UMP biosynthesis via de novo pathway; (S)-dihydroorotate from bicarbonate: step 1/3. Functionally, small subunit of the glutamine-dependent carbamoyl phosphate synthetase (CPSase). CPSase catalyzes the formation of carbamoyl phosphate from the ammonia moiety of glutamine, carbonate, and phosphate donated by ATP, constituting the first step of 2 biosynthetic pathways, one leading to arginine and/or urea and the other to pyrimidine nucleotides. The small subunit (glutamine amidotransferase) binds and cleaves glutamine to supply the large subunit with the substrate ammonia. This is Carbamoyl phosphate synthase small chain from Lactococcus lactis subsp. lactis (strain IL1403) (Streptococcus lactis).